The primary structure comprises 851 residues: Protein BCK2 (851 aa).

The span at 1-10 shows a compositional bias: basic residues; that stretch reads MPKNSHHHRS. Disordered stretches follow at residues 1 to 91, 233 to 271, 315 to 355, 466 to 504, and 698 to 722; these read MPKN…RKKS, EVVPKSTHDPSLAKPPSRFTESETNSTPNLSSIPLMNTK, SLSL…LPEE, FLDGQPQHKSGSVKGGHRKKQESISDAQRIQHSNSYITT, and HASRSESNNNTGNRVSYSGSTPNNV. Residues 11–23 are compositionally biased toward low complexity; it reads SSVNSTKSRSTES. Over residues 37–66 the composition is skewed to polar residues; sequence ASGSTQASPDRNSSTGSCSTPVLPTMNVMS. A compositionally biased stretch (basic and acidic residues) spans 71-81; it reads VLLEDPRDNHT. Composition is skewed to polar residues over residues 254–271, 334–349, 489–504, and 702–722; these read SETNSTPNLSSIPLMNTK, SPRTSRSFNCGDSQSK, ISDAQRIQHSNSYITT, and SESNNNTGNRVSYSGSTPNNV. Serine 334 carries the phosphoserine modification. Phosphoserine occurs at positions 757 and 761.

Its function is as follows. Dosage dependent suppressor of PKC1 deletion and MPK1 deletion. Involved in cell lysis. The chain is Protein BCK2 (BCK2) from Saccharomyces cerevisiae (strain ATCC 204508 / S288c) (Baker's yeast).